The sequence spans 103 residues: Phosphoribosyl-ATP pyrophosphatase (103 aa).

The protein belongs to the PRA-PH family.

The protein localises to the cytoplasm. It catalyses the reaction 1-(5-phospho-beta-D-ribosyl)-ATP + H2O = 1-(5-phospho-beta-D-ribosyl)-5'-AMP + diphosphate + H(+). The protein operates within amino-acid biosynthesis; L-histidine biosynthesis; L-histidine from 5-phospho-alpha-D-ribose 1-diphosphate: step 2/9. This is Phosphoribosyl-ATP pyrophosphatase from Listeria monocytogenes serotype 4a (strain HCC23).